Here is a 474-residue protein sequence, read N- to C-terminus: Crocetin glucosyltransferase, chloroplastic (474 aa).

The transit peptide at 1–45 (MVQQRHVLLITYPAQGHINPALQFAQRLLRMGIQVTLATSVYALS) directs the protein to the chloroplast. The Proton acceptor role is filled by His-17. Position 17 (His-17) interacts with an anthocyanidin. UDP-alpha-D-glucose contacts are provided by Gln-346, His-361, Trp-364, Asn-365, Ser-366, Glu-369, Asp-385, and Gln-386.

It belongs to the UDP-glycosyltransferase family. Ubiquitous.

Its subcellular location is the plastid. It localises to the chloroplast. It catalyses the reaction crocetin + UDP-alpha-D-glucose = beta-D-glucosyl crocetin + UDP. It carries out the reaction beta-D-glucosyl crocetin + UDP-alpha-D-glucose = bis(beta-D-glucosyl) crocetin + UDP. The catalysed reaction is beta-D-gentiobiosyl crocetin + UDP-alpha-D-glucose = beta-D-gentiobiosyl beta-D-glucosyl crocetin + UDP. Its function is as follows. Glucosyltransferase acting on a broad range of substrates, including crocetin, 4-coumaric acid, caffeic acid and ferulic acid. No activity with indol-3-acetic acid, bixin and norbixin, and no formation of O-glucosides. Involved with UGT94E5 in sequential glycosylation of crocetin to crocin (bis(beta-D-gentiobiosyl) crocetin). This chain is Crocetin glucosyltransferase, chloroplastic (UGT75L6), found in Gardenia jasminoides (Cape jasmine).